The primary structure comprises 358 residues: Pyruvate dehydrogenase E1 component subunit alpha (358 aa).

As to quaternary structure, heterodimer of an alpha and a beta chain. Requires thiamine diphosphate as cofactor.

The enzyme catalyses N(6)-[(R)-lipoyl]-L-lysyl-[protein] + pyruvate + H(+) = N(6)-[(R)-S(8)-acetyldihydrolipoyl]-L-lysyl-[protein] + CO2. Functionally, the pyruvate dehydrogenase complex catalyzes the overall conversion of pyruvate to acetyl-CoA and CO(2). It contains multiple copies of three enzymatic components: pyruvate dehydrogenase (E1), dihydrolipoamide acetyltransferase (E2) and lipoamide dehydrogenase (E3). In Mycoplasma pneumoniae (strain ATCC 29342 / M129 / Subtype 1) (Mycoplasmoides pneumoniae), this protein is Pyruvate dehydrogenase E1 component subunit alpha (pdhA).